The sequence spans 511 residues: Cytochrome P450 705A5 (511 aa).

The helical transmembrane segment at 12–30 threads the bilayer; sequence CFIFLLLCLFSRLSYDLFF. Cysteine 454 contributes to the heme binding site.

The protein belongs to the cytochrome P450 family. It depends on heme as a cofactor. In terms of tissue distribution, expressed primarily in the root epidermis.

Its subcellular location is the membrane. Converts thalian-diol to a desaturated thalian-diol. In Arabidopsis thaliana (Mouse-ear cress), this protein is Cytochrome P450 705A5 (CYP705A5).